Here is a 157-residue protein sequence, read N- to C-terminus: Small ribosomal subunit protein uS7 (157 aa).

The protein belongs to the universal ribosomal protein uS7 family. In terms of assembly, part of the 30S ribosomal subunit. Contacts proteins S9 and S11.

Functionally, one of the primary rRNA binding proteins, it binds directly to 16S rRNA where it nucleates assembly of the head domain of the 30S subunit. Is located at the subunit interface close to the decoding center, probably blocks exit of the E-site tRNA. The sequence is that of Small ribosomal subunit protein uS7 from Hydrogenovibrio crunogenus (strain DSM 25203 / XCL-2) (Thiomicrospira crunogena).